A 507-amino-acid chain; its full sequence is Subtilisin-like protease 1 (507 aa).

An N-terminal signal peptide occupies residues 1 to 19 (MGVFRFISISLAAVSAANA). Positions 20–116 (AQILSMPHAQ…VEPDTIISVN (97 aa)) are excised as a propeptide. Residues 34–113 (SYIVMMKDDT…VMFVEPDTII (80 aa)) enclose the Inhibitor I9 domain. A Peptidase S8 domain is found at 126-400 (SWGLARISNS…NVLISNGGAK (275 aa)). Catalysis depends on charge relay system residues Asp-158 and His-190. The interval 175-198 (GSNQVNDGDDRDGSGHGTHTSGTM) is disordered. A glycan (N-linked (GlcNAc...) asparagine) is linked at Asn-251. Over residues 282-294 (NENQDARSSSPAS) the composition is skewed to polar residues. A disordered region spans residues 282–312 (NENQDARSSSPASEPSVCTVGSSAEDDSRSS). The Charge relay system role is filled by Ser-345. Residues 378–394 (SSSITDVGPGTPTNVLI) show a composition bias toward polar residues. The disordered stretch occupies residues 378 to 486 (SSSITDVGPG…YPGGDNFDFD (109 aa)). Pro residues-rich tracts occupy residues 405–428 (KPAPGPSPNPSQPSEPQQPAPSQP) and 438–449 (EPFPGEPFPGEP). Low complexity predominate over residues 450–461 (FPGESSPGESAP). Positions 462–476 (APAPMPPSPQHPHTP) are enriched in pro residues.

The protein belongs to the peptidase S8 family.

It localises to the secreted. Functionally, secreted subtilisin-like serine protease with keratinolytic activity that contributes to pathogenicity. This Trichophyton equinum (Horse ringworm fungus) protein is Subtilisin-like protease 1 (SUB1).